Consider the following 347-residue polypeptide: NADH-ubiquinone oxidoreductase chain 2 (347 aa).

Transmembrane regions (helical) follow at residues 13 to 33, 56 to 76, 96 to 116, 123 to 143, 149 to 169, 178 to 198, 201 to 221, 247 to 267, 274 to 294, and 326 to 346; these read IFAG…WVGL, AIKY…AILF, LMIM…FWVP, PLTS…SIMY, LNVS…SWGG, ILAY…PYNP, TILN…LLNL, TLLS…WAII, NSLI…YFYL, and LPTL…MLMI.

Belongs to the complex I subunit 2 family. In terms of assembly, core subunit of respiratory chain NADH dehydrogenase (Complex I) which is composed of 45 different subunits. Interacts with TMEM242.

The protein localises to the mitochondrion inner membrane. It catalyses the reaction a ubiquinone + NADH + 5 H(+)(in) = a ubiquinol + NAD(+) + 4 H(+)(out). Its function is as follows. Core subunit of the mitochondrial membrane respiratory chain NADH dehydrogenase (Complex I) which catalyzes electron transfer from NADH through the respiratory chain, using ubiquinone as an electron acceptor. Essential for the catalytic activity and assembly of complex I. This Homo sapiens (Human) protein is NADH-ubiquinone oxidoreductase chain 2.